The primary structure comprises 565 residues: MDDWENNDFIQRLDFSSCGEEGEDRSINEEDTLSSSPIKHCDFQKWNSPLPATPHRKLSEIFLSRTKSWVSPTLKSSPGVSRTHGNAETPLHITWKKLQLCDTPHTPKSLLSKTAFPSPGAKVPPKGFRHLRFTPGADLDDSTQASLVNINPFTPESYRQMLFLPNGKRKAREIKLVHLAQSFCEKAEVQRKDSAVRPADRCPLKDSNMVSRYQKEFLELERIGVGEFGSVYKCIKRLDGCVYAIKRSKRPLAGSSDEQLALREVYAHAVLGHHPHVVRYYSAWAEDDHMIIQNEHCNGGSLQDVLLENAKRGQYFPEAKLKEILLQVSMGLKYIHNSGLVHLDIKPSNIFICHKLVVEGQAGQEESDSDDEFSSGVMYKIGDLGHVTSIANPQVEEGDRRFLANEILQEQYFHLPKADIFALALTIALAAGAGPLPHNGAMWHHIRKGNIPSIPQKLPNGFIELLKLMIHPDPMERPSATALTKHPILRPSLGKAVQLQKQLNVEKCKTAMLERELKAARLAQTLMKDQPLGNANLQESETSPKKNNKRLVGGKNCRSFSFTVG.

One can recognise a Protein kinase domain in the interval 217 to 493 (FLELERIGVG…TKHPILRPSL (277 aa)). ATP contacts are provided by residues 223–231 (IGVGEFGSV) and Lys-246. Asp-344 (proton acceptor) is an active-site residue. 2 residues coordinate Mg(2+): Asn-349 and Asp-383. Residues 496-522 (AVQLQKQLNVEKCKTAMLERELKAARL) are a coiled coil. Positions 531–553 (PLGNANLQESETSPKKNNKRLVG) are disordered.

Belongs to the protein kinase superfamily. Ser/Thr protein kinase family. WEE1 subfamily.

It is found in the nucleus. It catalyses the reaction L-tyrosyl-[protein] + ATP = O-phospho-L-tyrosyl-[protein] + ADP + H(+). In terms of biological role, oocyte-specific protein tyrosine kinase that phosphorylates and inhibits CDK1 and acts as a key regulator of meiosis. Required to maintain meiotic arrest in oocytes by phosphorylating CDK1 at 'Tyr-15', leading to inhibit CDK1 activity and prevent meiotic reentry. The sequence is that of Wee1-like protein kinase 2 (WEE2) from Gallus gallus (Chicken).